A 123-amino-acid polypeptide reads, in one-letter code: Thioredoxin domain-containing protein 17 (123 aa).

Alanine 2 carries the post-translational modification N-acetylalanine. Residues 41 to 123 enclose the Thioredoxin domain; the sequence is SWCPDCVEAE…SLVEMIFSED (83 aa). Residues cysteine 43 and cysteine 46 each act as nucleophile in the active site. Residues cysteine 43 and cysteine 46 are joined by a disulfide bond.

The protein belongs to the thioredoxin family. In terms of assembly, interacts with TRXR1 and DYNLL1/DNCL1. In terms of processing, the oxidized protein is reduced by TRXR1.

It is found in the cytoplasm. Its function is as follows. Disulfide reductase. May participate in various redox reactions through the reversible oxidation of its active center dithiol to a disulfide and catalyze dithiol-disulfide exchange reactions. Modulates TNF-alpha signaling and NF-kappa-B activation. Has peroxidase activity and may contribute to the elimination of cellular hydrogen peroxide. The chain is Thioredoxin domain-containing protein 17 (Txndc17) from Mus musculus (Mouse).